Reading from the N-terminus, the 353-residue chain is 3'(2'),5'-bisphosphate nucleotidase (353 aa).

The active-site Proton acceptor is Asp-50. The Mg(2+) site is built by Glu-73, Asp-136, Ile-138, and Asp-139. Thr-141 functions as the Proton acceptor in the catalytic mechanism. Thr-141, His-232, Ser-256, Lys-259, Arg-273, and Asp-286 together coordinate adenosine 3',5'-bisphosphate. AMP-binding residues include His-232, Ser-256, Lys-259, Arg-273, and Asp-286. Residue Asp-286 participates in Mg(2+) binding.

The protein belongs to the inositol monophosphatase superfamily. The cofactor is Mg(2+).

The enzyme catalyses 3'-phosphoadenylyl sulfate + H2O = adenosine 5'-phosphosulfate + phosphate. The catalysed reaction is adenosine 3',5'-bisphosphate + H2O = AMP + phosphate. It carries out the reaction adenosine 2',5'-bisphosphate + H2O = AMP + phosphate. It catalyses the reaction 1D-myo-inositol 1,4-bisphosphate + H2O = 1D-myo-inositol 4-phosphate + phosphate. The enzyme catalyses 1D-myo-inositol 1,3,4-trisphosphate + H2O = 1D-myo-inositol 3,4-bisphosphate + phosphate. Inhibited by Li(+) and Na(+). Its function is as follows. Phosphatase that converts adenosine 3'-phosphate 5'-phosphosulfate (PAPS) to adenosine 5'-phosphosulfate (APS) and 3'(2')-phosphoadenosine 5'-phosphate (PAP) to AMP. May regulate the flux of sulfur in the sulfur-activation pathway by converting PAPS to APS. Is also able to hydrolyze inositol 1,4-bisphosphate (Ins(1,4)P2) and inositol 1,3,4-trisphosphate (Ins(1,3,4)P3), but is not active on inositol 1,4,5-trisphosphate, inositol 1-phosphate, fructose 1,6-bisphosphate, AMP and ATP. Confers resistance to lithium. In Schizosaccharomyces pombe (strain 972 / ATCC 24843) (Fission yeast), this protein is 3'(2'),5'-bisphosphate nucleotidase (tol1).